A 202-amino-acid chain; its full sequence is Dephospho-CoA kinase (202 aa).

One can recognise a DPCK domain in the interval 5 to 202; the sequence is IVGLTGGIAS…DADYRARANP (198 aa). Position 13–18 (13–18) interacts with ATP; it reads ASGKSA.

This sequence belongs to the CoaE family.

The protein localises to the cytoplasm. The enzyme catalyses 3'-dephospho-CoA + ATP = ADP + CoA + H(+). It functions in the pathway cofactor biosynthesis; coenzyme A biosynthesis; CoA from (R)-pantothenate: step 5/5. Functionally, catalyzes the phosphorylation of the 3'-hydroxyl group of dephosphocoenzyme A to form coenzyme A. The protein is Dephospho-CoA kinase of Xanthomonas axonopodis pv. citri (strain 306).